Consider the following 287-residue polypeptide: tRNA selenocysteine 1-associated protein 1 (287 aa).

RRM domains follow at residues 3–86 and 96–175; these read ASLW…YVTY and YSLF…VAIP.

Belongs to the RRM TRSPAP family. In terms of assembly, component of the tRNA(Sec) complex composed at least of EEFSEC, SECISBP2, SEPHS1, SEPSECS, TRNAU1AP and tRNA(Sec). Found in a complex with tRNA(Sec). Interacts with SEPSECS. Associates with mRNP and/or polysomes. Found in a complex with EEFSEC, SECISBP2, TRNAU1AP and tRNA(Sec).

The protein resides in the nucleus. It is found in the cytoplasm. Functionally, involved in the early steps of selenocysteine biosynthesis and tRNA(Sec) charging to the later steps resulting in the cotranslational incorporation of selenocysteine into selenoproteins. Stabilizes the SECISBP2, EEFSEC and tRNA(Sec) complex. May be involved in the methylation of tRNA(Sec). Enhances efficiency of selenoproteins synthesis. The chain is tRNA selenocysteine 1-associated protein 1 (TRNAU1AP) from Pongo abelii (Sumatran orangutan).